The following is a 163-amino-acid chain: GTP-dependent dephospho-CoA kinase (163 aa).

GTP-binding residues include Asp38, Val39, Asp57, Glu115, and Asp138.

It belongs to the GTP-dependent DPCK family.

It catalyses the reaction 3'-dephospho-CoA + GTP = GDP + CoA + H(+). Its pathway is cofactor biosynthesis; coenzyme A biosynthesis. Functionally, catalyzes the GTP-dependent phosphorylation of the 3'-hydroxyl group of dephosphocoenzyme A to form coenzyme A (CoA). This chain is GTP-dependent dephospho-CoA kinase, found in Methanothermobacter thermautotrophicus (strain ATCC 29096 / DSM 1053 / JCM 10044 / NBRC 100330 / Delta H) (Methanobacterium thermoautotrophicum).